A 539-amino-acid chain; its full sequence is CTP synthase (539 aa).

The amidoligase domain stretch occupies residues 1 to 268; sequence MADTKYIFVT…DETVLRKVGL (268 aa). S15 lines the CTP pocket. UTP is bound at residue S15. 16–21 serves as a coordination point for ATP; sequence SLGKGI. Y56 lines the L-glutamine pocket. D73 contacts ATP. 2 residues coordinate Mg(2+): D73 and E143. CTP is bound by residues 150-152, 189-194, and K225; these read DIE and KTKPTQ. UTP is bound by residues 189-194 and K225; that span reads KTKPTQ. Positions 294-536 constitute a Glutamine amidotransferase type-1 domain; sequence TIALVGKYVE…IREAIKTRKK (243 aa). Residue G356 coordinates L-glutamine. The active-site Nucleophile; for glutamine hydrolysis is C383. L-glutamine is bound by residues 384–387, E407, and R464; that span reads LGMQ. Catalysis depends on residues H509 and E511.

The protein belongs to the CTP synthase family. Homotetramer.

The enzyme catalyses UTP + L-glutamine + ATP + H2O = CTP + L-glutamate + ADP + phosphate + 2 H(+). The catalysed reaction is L-glutamine + H2O = L-glutamate + NH4(+). It carries out the reaction UTP + NH4(+) + ATP = CTP + ADP + phosphate + 2 H(+). Its pathway is pyrimidine metabolism; CTP biosynthesis via de novo pathway; CTP from UDP: step 2/2. With respect to regulation, allosterically activated by GTP, when glutamine is the substrate; GTP has no effect on the reaction when ammonia is the substrate. The allosteric effector GTP functions by stabilizing the protein conformation that binds the tetrahedral intermediate(s) formed during glutamine hydrolysis. Inhibited by the product CTP, via allosteric rather than competitive inhibition. Its function is as follows. Catalyzes the ATP-dependent amination of UTP to CTP with either L-glutamine or ammonia as the source of nitrogen. Regulates intracellular CTP levels through interactions with the four ribonucleotide triphosphates. The polypeptide is CTP synthase (Porphyromonas gingivalis (strain ATCC 33277 / DSM 20709 / CIP 103683 / JCM 12257 / NCTC 11834 / 2561)).